Consider the following 66-residue polypeptide: uncharacterized protein (66 aa).

One can recognise an HTH cro/C1-type domain in the interval 5–59 (VKELRARFGYSQEKLGETVGVTRQTVAAIEKGDYVPSLLLALKICKAFSMKMEDV). A DNA-binding region (H-T-H motif) is located at residues 16-35 (QEKLGETVGVTRQTVAAIEK).

This is an uncharacterized protein from Bacillus subtilis (strain 168).